Here is a 251-residue protein sequence, read N- to C-terminus: Maleate isomerase (251 aa).

Residues asparagine 15, 81-83 (CLV), tyrosine 138, and asparagine 168 contribute to the substrate site. Cysteine 81 functions as the Nucleophile in the catalytic mechanism. Cysteine 81 carries the S-(2-succinyl)cysteine modification. The active-site Proton donor is the cysteine 199. Residue 200–201 (VQ) coordinates substrate.

It belongs to the maleate isomerase family. Homodimer.

The enzyme catalyses maleate = fumarate. Its function is as follows. Catalyzes cis-trans isomerization of the C2-C3 double bond in maleate to yield fumarate. The sequence is that of Maleate isomerase from Geobacillus stearothermophilus (Bacillus stearothermophilus).